Consider the following 699-residue polypeptide: Elongation factor G (699 aa).

The 283-residue stretch at 10–292 folds into the tr-type G domain; the sequence is NRTRNIGIMA…AVIDYLPSPT (283 aa). GTP is bound by residues 19–26, 90–94, and 144–147; these read AHIDAGKT, DTPGH, and NKMD. Residues 292-312 form a disordered region; the sequence is TDVPAIRGEEDDGSEGSRSAS.

This sequence belongs to the TRAFAC class translation factor GTPase superfamily. Classic translation factor GTPase family. EF-G/EF-2 subfamily.

The protein localises to the cytoplasm. Its function is as follows. Catalyzes the GTP-dependent ribosomal translocation step during translation elongation. During this step, the ribosome changes from the pre-translocational (PRE) to the post-translocational (POST) state as the newly formed A-site-bound peptidyl-tRNA and P-site-bound deacylated tRNA move to the P and E sites, respectively. Catalyzes the coordinated movement of the two tRNA molecules, the mRNA and conformational changes in the ribosome. The sequence is that of Elongation factor G from Coxiella burnetii (strain RSA 331 / Henzerling II).